A 592-amino-acid polypeptide reads, in one-letter code: Aspartate--tRNA ligase (592 aa).

Residue Glu173 participates in L-aspartate binding. The tract at residues 197–200 (QLFK) is aspartate. Arg219 lines the L-aspartate pocket. ATP is bound by residues 219 to 221 (RDE) and Gln228. An L-aspartate-binding site is contributed by His448. Glu482 contributes to the ATP binding site. Arg489 contributes to the L-aspartate binding site. 534–537 (GLDR) serves as a coordination point for ATP.

This sequence belongs to the class-II aminoacyl-tRNA synthetase family. Type 1 subfamily. In terms of assembly, homodimer.

Its subcellular location is the cytoplasm. It catalyses the reaction tRNA(Asp) + L-aspartate + ATP = L-aspartyl-tRNA(Asp) + AMP + diphosphate. In terms of biological role, catalyzes the attachment of L-aspartate to tRNA(Asp) in a two-step reaction: L-aspartate is first activated by ATP to form Asp-AMP and then transferred to the acceptor end of tRNA(Asp). In Shewanella baltica (strain OS195), this protein is Aspartate--tRNA ligase.